The primary structure comprises 397 residues: Yellow-related salivary protein LJM111 (397 aa).

Positions 1 to 18 are cleaved as a signal peptide; the sequence is MKLFFFLYTFGLVQTIFG.

This sequence belongs to the major royal jelly protein family. In terms of tissue distribution, salivary gland (at protein level).

The protein resides in the secreted. In terms of biological role, probably modulates blood feeding of sand flies on vertebrate species by binding and sequestering different mediators involved in the host response. Binds biogenic amines. Binds adrenaline and noradrenaline with high affinity. Binds serotonin. Binds dopamine and octopamine. Exhibits anti-inflammatory effects in the host: reduces IL17A, TNF-alpha (TNF) and IFN-gamma (IFNG) production by host lymph node cells, suppresses expression of MHC-II and CD86, reduces TNF-alpha production and increases IL10 production, in host bone marrow-derived dendritic cells (BMDCs) stimulated by lipopolysaccharides. Reduces pain in mouse mechanical hypernociception model. This chain is Yellow-related salivary protein LJM111, found in Lutzomyia longipalpis (Sand fly).